The primary structure comprises 224 residues: 7-cyano-7-deazaguanine synthase (224 aa).

12-22 lines the ATP pocket; that stretch reads LSGGLDSSTVT. Positions 193, 201, 204, and 207 each coordinate Zn(2+).

The protein belongs to the QueC family. The cofactor is Zn(2+).

The catalysed reaction is 7-carboxy-7-deazaguanine + NH4(+) + ATP = 7-cyano-7-deazaguanine + ADP + phosphate + H2O + H(+). The protein operates within purine metabolism; 7-cyano-7-deazaguanine biosynthesis. Functionally, catalyzes the ATP-dependent conversion of 7-carboxy-7-deazaguanine (CDG) to 7-cyano-7-deazaguanine (preQ(0)). In Prochlorococcus marinus (strain AS9601), this protein is 7-cyano-7-deazaguanine synthase.